Consider the following 445-residue polypeptide: Xylose isomerase (445 aa).

Catalysis depends on residues His99 and Asp102. Mg(2+) is bound by residues Glu230, Glu266, His269, Asp294, Asp305, Asp307, and Asp337.

It belongs to the xylose isomerase family. Homotetramer. Requires Mg(2+) as cofactor.

The protein localises to the cytoplasm. The catalysed reaction is alpha-D-xylose = alpha-D-xylulofuranose. In Geobacillus kaustophilus (strain HTA426), this protein is Xylose isomerase.